Here is a 361-residue protein sequence, read N- to C-terminus: Queuine tRNA-ribosyltransferase (361 aa).

D92 (proton acceptor) is an active-site residue. Substrate is bound by residues 92-96 (DSGGF), D146, Q189, and G216. The segment at 247 to 253 (GVGKPAD) is RNA binding. D266 serves as the catalytic Nucleophile. Residues 271–275 (TRSGR) form an RNA binding; important for wobble base 34 recognition region. 4 residues coordinate Zn(2+): C304, C306, C309, and H335.

It belongs to the queuine tRNA-ribosyltransferase family. As to quaternary structure, homodimer. Within each dimer, one monomer is responsible for RNA recognition and catalysis, while the other monomer binds to the replacement base PreQ1. Zn(2+) is required as a cofactor.

It carries out the reaction 7-aminomethyl-7-carbaguanine + guanosine(34) in tRNA = 7-aminomethyl-7-carbaguanosine(34) in tRNA + guanine. It functions in the pathway tRNA modification; tRNA-queuosine biosynthesis. Its function is as follows. Catalyzes the base-exchange of a guanine (G) residue with the queuine precursor 7-aminomethyl-7-deazaguanine (PreQ1) at position 34 (anticodon wobble position) in tRNAs with GU(N) anticodons (tRNA-Asp, -Asn, -His and -Tyr). Catalysis occurs through a double-displacement mechanism. The nucleophile active site attacks the C1' of nucleotide 34 to detach the guanine base from the RNA, forming a covalent enzyme-RNA intermediate. The proton acceptor active site deprotonates the incoming PreQ1, allowing a nucleophilic attack on the C1' of the ribose to form the product. After dissociation, two additional enzymatic reactions on the tRNA convert PreQ1 to queuine (Q), resulting in the hypermodified nucleoside queuosine (7-(((4,5-cis-dihydroxy-2-cyclopenten-1-yl)amino)methyl)-7-deazaguanosine). The sequence is that of Queuine tRNA-ribosyltransferase from Rickettsia felis (strain ATCC VR-1525 / URRWXCal2) (Rickettsia azadi).